The primary structure comprises 253 residues: ER membrane protein complex subunit 3 (253 aa).

Transmembrane regions (helical) follow at residues 10-30, 126-146, and 176-196; these read WVLL…QYIM, FIPQ…FILM, and SISW…LIGL.

It belongs to the EMC3 family. In terms of assembly, component of the ER membrane protein complex (EMC), which is composed of EMC1, EMC2, EMC3, EMC4, EMC5 and EMC6.

Its subcellular location is the endoplasmic reticulum membrane. In terms of biological role, the EMC seems to be required for efficient folding of proteins in the endoplasmic reticulum (ER). This chain is ER membrane protein complex subunit 3 (AIM27), found in Saccharomyces cerevisiae (strain RM11-1a) (Baker's yeast).